The chain runs to 207 residues: dTTP/UTP pyrophosphatase (207 aa).

The Proton acceptor role is filled by aspartate 87.

The protein belongs to the Maf family. YhdE subfamily. It depends on a divalent metal cation as a cofactor.

The protein localises to the cytoplasm. The enzyme catalyses dTTP + H2O = dTMP + diphosphate + H(+). The catalysed reaction is UTP + H2O = UMP + diphosphate + H(+). In terms of biological role, nucleoside triphosphate pyrophosphatase that hydrolyzes dTTP and UTP. May have a dual role in cell division arrest and in preventing the incorporation of modified nucleotides into cellular nucleic acids. This Bordetella pertussis (strain Tohama I / ATCC BAA-589 / NCTC 13251) protein is dTTP/UTP pyrophosphatase.